A 391-amino-acid polypeptide reads, in one-letter code: Protein-glutamate methylesterase/protein-glutamine glutaminase of group 2 operon (391 aa).

The 119-residue stretch at 20–138 (RVMIVDDSVV…EPQAADIFKH (119 aa)) folds into the Response regulatory domain. D71 is modified (4-aspartylphosphate). The CheB-type methylesterase domain occupies 196–383 (PTAPRVLLIG…PLNQIGPKVV (188 aa)). Catalysis depends on residues S207, H235, and D331.

This sequence belongs to the CheB family. Phosphorylated by CheA. Phosphorylation of the N-terminal regulatory domain activates the methylesterase activity.

It is found in the cytoplasm. The catalysed reaction is [protein]-L-glutamate 5-O-methyl ester + H2O = L-glutamyl-[protein] + methanol + H(+). It carries out the reaction L-glutaminyl-[protein] + H2O = L-glutamyl-[protein] + NH4(+). Its function is as follows. Involved in chemotaxis. Part of a chemotaxis signal transduction system that modulates chemotaxis in response to various stimuli. Catalyzes the demethylation of specific methylglutamate residues introduced into the chemoreceptors (methyl-accepting chemotaxis proteins or MCP) by CheR. Also mediates the irreversible deamidation of specific glutamine residues to glutamic acid. The chain is Protein-glutamate methylesterase/protein-glutamine glutaminase of group 2 operon from Rhodopseudomonas palustris (strain ATCC BAA-98 / CGA009).